The sequence spans 153 residues: Large ribosomal subunit protein uL23m (153 aa).

The disordered stretch occupies residues 131–153 (MADEQQRQGSDPQRGGVPNWFSL).

The protein belongs to the universal ribosomal protein uL23 family. In terms of assembly, component of the mitochondrial ribosome large subunit (39S) which comprises a 16S rRNA and about 50 distinct proteins.

It localises to the mitochondrion. The chain is Large ribosomal subunit protein uL23m (MRPL23) from Otolemur garnettii (Small-eared galago).